Consider the following 1697-residue polypeptide: Neurexin-3a (1697 aa).

The signal sequence occupies residues 1–23; sequence MNFFRFPVQLQLLISTVLGPCLG. A Laminin G-like 1 domain is found at 24–198; it reads LEFTGLQGQW…RVRMDIEGIC (175 aa). Residues 24–1622 lie on the Extracellular side of the membrane; the sequence is LEFTGLQGQW…EVVRESSSTT (1599 aa). Positions 194–231 constitute an EGF-like 1 domain; the sequence is IEGICMENPCENGGTCSVVDGEPLCDCSKTEYVGRFCN. 3 cysteine pairs are disulfide-bonded: Cys198–Cys209, Cys203–Cys218, and Cys220–Cys230. 2 Laminin G-like domains span residues 258–455 and 462–654; these read VATF…VFKC and DPIS…KPSC. Asp304, Leu321, and Met389 together coordinate Ca(2+). Disulfide bonds link Cys419-Cys455, Cys625-Cys654, Cys662-Cys673, Cys667-Cys682, and Cys684-Cys694. One can recognise an EGF-like 2 domain in the interval 658 to 695; that stretch reads SGKQCDSYPCKNKGLCKEGWNRFICDCTGTGYWSRTCE. Laminin G-like domains are found at residues 700–872 and 886–1061; these read ILSY…IDFC and DPVT…ERGC. Cystine bridges form between Cys1033–Cys1061, Cys1077–Cys1088, Cys1082–Cys1097, and Cys1099–Cys1109. One can recognise an EGF-like 3 domain in the interval 1073 to 1110; sequence PSTTCQEDSCANMGICIQQWENYTCDCSMTSYTGTHCN. One can recognise a Laminin G-like 6 domain in the interval 1114 to 1314; it reads TTYIFGKGGG…NPNIKINGSV (201 aa). 3 disordered regions span residues 1345-1366, 1442-1479, and 1520-1557; these read TMST…TDDM, LSDG…NLPP, and PNKV…KMNH. Residues 1446-1461 show a composition bias toward acidic residues; sequence GSDDCGDDDDDDDDDG. Residues 1527–1547 show a composition bias toward polar residues; it reads GRTTTASFSPKLSRSTTTSTP. A helical transmembrane segment spans residues 1623 to 1643; that stretch reads GMVVGIVAAAALCILILLYAM. At 1644–1697 the chain is on the cytoplasmic side; that stretch reads YKYRNRDEGSYQVDETRNYITNSAQSNGAVMKDKQQSTKSGNKKQKNKDKEYYV. The tract at residues 1665-1697 is disordered; sequence NSAQSNGAVMKDKQQSTKSGNKKQKNKDKEYYV.

It belongs to the neurexin family.

The protein localises to the membrane. Neuronal cell surface protein that may be involved in cell recognition and cell adhesion. This is Neurexin-3a (nrxn3a) from Danio rerio (Zebrafish).